Reading from the N-terminus, the 155-residue chain is Small ribosomal subunit protein uS7 (155 aa).

It belongs to the universal ribosomal protein uS7 family. In terms of assembly, part of the 30S ribosomal subunit. Contacts proteins S9 and S11.

Its function is as follows. One of the primary rRNA binding proteins, it binds directly to 16S rRNA where it nucleates assembly of the head domain of the 30S subunit. Is located at the subunit interface close to the decoding center, probably blocks exit of the E-site tRNA. This chain is Small ribosomal subunit protein uS7, found in Corynebacterium diphtheriae (strain ATCC 700971 / NCTC 13129 / Biotype gravis).